The chain runs to 841 residues: Translation initiation factor IF-2 (841 aa).

5 stretches are compositionally biased toward basic and acidic residues: residues M1–K12, E50–K92, E114–A170, R188–R202, and K213–G235. Disordered stretches follow at residues M1–V24 and E50–L246. The region spanning T340–T510 is the tr-type G domain. Positions G349–T356 are G1. GTP is bound at residue G349–T356. The G2 stretch occupies residues G374–H378. A G3 region spans residues D396–G399. Residues D396–H400 and N450–D453 each bind GTP. The G4 stretch occupies residues N450–D453. The interval S486 to K488 is G5.

The protein belongs to the TRAFAC class translation factor GTPase superfamily. Classic translation factor GTPase family. IF-2 subfamily.

Its subcellular location is the cytoplasm. Its function is as follows. One of the essential components for the initiation of protein synthesis. Protects formylmethionyl-tRNA from spontaneous hydrolysis and promotes its binding to the 30S ribosomal subunits. Also involved in the hydrolysis of GTP during the formation of the 70S ribosomal complex. In Actinobacillus pleuropneumoniae serotype 3 (strain JL03), this protein is Translation initiation factor IF-2.